Consider the following 99-residue polypeptide: Integration host factor subunit alpha (99 aa).

It belongs to the bacterial histone-like protein family. As to quaternary structure, heterodimer of an alpha and a beta chain.

In terms of biological role, this protein is one of the two subunits of integration host factor, a specific DNA-binding protein that functions in genetic recombination as well as in transcriptional and translational control. The chain is Integration host factor subunit alpha (ihfA) from Xanthomonas axonopodis pv. citri (strain 306).